Consider the following 363-residue polypeptide: Aminomethyltransferase (363 aa).

It belongs to the GcvT family. The glycine cleavage system is composed of four proteins: P, T, L and H.

It catalyses the reaction N(6)-[(R)-S(8)-aminomethyldihydrolipoyl]-L-lysyl-[protein] + (6S)-5,6,7,8-tetrahydrofolate = N(6)-[(R)-dihydrolipoyl]-L-lysyl-[protein] + (6R)-5,10-methylene-5,6,7,8-tetrahydrofolate + NH4(+). Functionally, the glycine cleavage system catalyzes the degradation of glycine. The chain is Aminomethyltransferase from Thermosipho melanesiensis (strain DSM 12029 / CIP 104789 / BI429).